The following is a 278-amino-acid chain: UPF0758 protein BURPS1106A_0984 (278 aa).

The disordered stretch occupies residues 1 to 64 (MQYEIVSAGE…ATAAARRGRD (64 aa)). The span at 22-59 (AAAPAAPSSAVPSSAALSSAALSSAAQPTGAPPATAAA) shows a compositional bias: low complexity. An MPN domain is found at 156–278 (LVDSPGAVDD…TFSFAQAGWI (123 aa)). 3 residues coordinate Zn(2+): His227, His229, and Asp240. The short motif at 227 to 240 (HNHPSGAVRPSAAD) is the JAMM motif element.

This sequence belongs to the UPF0758 family.

The chain is UPF0758 protein BURPS1106A_0984 from Burkholderia pseudomallei (strain 1106a).